Reading from the N-terminus, the 86-residue chain is MKTLLLTLVVVTIVCLELGYTRKCLTKYSQDNESSKTCPSGQKLCFKKWETGKLLGTKVKRGCVATCPQPKKEWIIQCCAKDKCNK.

A signal peptide spans 1–21 (MKTLLLTLVVVTIVCLELGYT). 4 cysteine pairs are disulfide-bonded: cysteine 24–cysteine 45, cysteine 38–cysteine 63, cysteine 67–cysteine 78, and cysteine 79–cysteine 84.

In terms of tissue distribution, expressed by the venom gland.

It is found in the secreted. This Bungarus fasciatus (Banded krait) protein is Neurotoxin 3FTx-RK.